The primary structure comprises 1922 residues: Kinesin-related protein 4 (1922 aa).

The region spanning 22–343 is the Kinesin motor domain; that stretch reads KIKVAIRVRP…LQFAKRAKRV (322 aa). An ATP-binding site is contributed by 101–108; that stretch reads GQTSSGKT. A disordered region spans residues 448–538; that stretch reads QKIKKIKNSE…DDEFKDNLNL (91 aa). Residues 456–468 are compositionally biased toward low complexity; it reads SENNISSSSSNSS. Composition is skewed to acidic residues over residues 469-480 and 488-532; these read GEEDDDDKDDEN and DKDD…DDEF. The stretch at 562–1712 forms a coiled coil; sequence QVKVKREDLD…ELESTKQKNL (1151 aa). Residues 1887 to 1922 are disordered; the sequence is TSTDNLTTTSTSLKSKSSSNGENKENQNNNIIIKNN.

This sequence belongs to the TRAFAC class myosin-kinesin ATPase superfamily. Kinesin family.

The protein localises to the cytoplasm. It localises to the cytoskeleton. Microtubule-associated force-producing protein that plays a role in organelle transport. Its motor activity is directed toward the microtubule's plus end. Cooperates with dynein in organizing spindle assembly during cell division. This chain is Kinesin-related protein 4 (kif4), found in Dictyostelium discoideum (Social amoeba).